Consider the following 580-residue polypeptide: Long-chain-fatty-acid--AMP ligase FadD28 (580 aa).

A disordered region spans residues 421–440 (SERTFGGKIVTPSPGTPEGP).

This sequence belongs to the ATP-dependent AMP-binding enzyme family.

The catalysed reaction is holo-[mycocerosate synthase] + a long-chain fatty acid + ATP = a long-chain fatty acyl-[mycocerosate synthase] + AMP + diphosphate. It catalyses the reaction a long-chain fatty acid + ATP + H(+) = a long-chain fatty acyl-AMP + diphosphate. The enzyme catalyses holo-[mycocerosate synthase] + a long-chain fatty acyl-AMP = a long-chain fatty acyl-[mycocerosate synthase] + AMP + H(+). It functions in the pathway lipid metabolism; fatty acid biosynthesis. Its function is as follows. Involved in the biosynthesis of phthiocerol dimycocerosate (PDIM), a cell wall-associated lipid found only in pathogenic mycobacteria. Catalyzes the activation of long-chain fatty acids as acyl-adenylates (acyl-AMP), which are then transferred to the multifunctional polyketide synthase Mas for further chain extension. The chain is Long-chain-fatty-acid--AMP ligase FadD28 (fadD28) from Mycobacterium tuberculosis (strain CDC 1551 / Oshkosh).